Consider the following 234-residue polypeptide: MTRTPLIICDFDGTVTMNDNIVSMMKEFAPPEWLELKDGVLSKSISIQEGVGRMFGLLPSSLKEELTGFILKDAKIRDGFLDFVSFVRSNGLPFYIVSGGMDFFVHPLLEGIVEKERIFCNHASFDNEHIHIDWPHACDGDCTNQCGCCKPSVIRKLSDQQKFLIMIGDSVTDVEAAKLSDMCFARDYLLTECKELGLRHLPFQDFHEVKTGIENIGEVQAWLQKKNAGANLPR.

Belongs to the HAD-like hydrolase superfamily. MtnX family.

The catalysed reaction is 2-hydroxy-5-methylsulfanyl-3-oxopent-1-enyl phosphate + H2O = 1,2-dihydroxy-5-(methylsulfanyl)pent-1-en-3-one + phosphate. Its pathway is amino-acid biosynthesis; L-methionine biosynthesis via salvage pathway; L-methionine from S-methyl-5-thio-alpha-D-ribose 1-phosphate: step 4/6. In terms of biological role, dephosphorylates 2-hydroxy-3-keto-5-methylthiopentenyl-1-phosphate (HK-MTPenyl-1-P) yielding 1,2-dihydroxy-3-keto-5-methylthiopentene (DHK-MTPene). The polypeptide is 2-hydroxy-3-keto-5-methylthiopentenyl-1-phosphate phosphatase (Bacillus velezensis (strain DSM 23117 / BGSC 10A6 / LMG 26770 / FZB42) (Bacillus amyloliquefaciens subsp. plantarum)).